The sequence spans 62 residues: Large ribosomal subunit protein uL29 (62 aa).

The protein belongs to the universal ribosomal protein uL29 family.

The polypeptide is Large ribosomal subunit protein uL29 (Amoebophilus asiaticus (strain 5a2)).